We begin with the raw amino-acid sequence, 90 residues long: Probable Fe(2+)-trafficking protein (90 aa).

It belongs to the Fe(2+)-trafficking protein family.

In terms of biological role, could be a mediator in iron transactions between iron acquisition and iron-requiring processes, such as synthesis and/or repair of Fe-S clusters in biosynthetic enzymes. In Haemophilus influenzae (strain 86-028NP), this protein is Probable Fe(2+)-trafficking protein.